A 160-amino-acid polypeptide reads, in one-letter code: Glucan endo-1,3-beta-glucosidase, acidic isoform PR-O (160 aa).

Glutamate 81 serves as the catalytic Nucleophile.

It belongs to the glycosyl hydrolase 17 family. The N-terminus is blocked.

The protein localises to the secreted. Its subcellular location is the extracellular space. The catalysed reaction is Hydrolysis of (1-&gt;3)-beta-D-glucosidic linkages in (1-&gt;3)-beta-D-glucans.. Implicated in the defense of plants against pathogens. In Nicotiana tabacum (Common tobacco), this protein is Glucan endo-1,3-beta-glucosidase, acidic isoform PR-O (PR0).